The chain runs to 608 residues: ATP-citrate synthase beta chain protein 2 (608 aa).

ATP-binding positions include 214–234 and 265–291; these read ILRF…ELGG and FKSE…KNQA. Residue E231 participates in Mg(2+) binding. The Tele-phosphohistidine intermediate role is filled by H273. 292–302 lines the CoA pocket; that stretch reads LIDAGAIVPTS.

Belongs to the succinate/malate CoA ligase alpha subunit family. As to quaternary structure, heterooctamer of 4 alpha and 4 beta chains. In terms of tissue distribution, expressed in trichomes, epidermal leaf cells, anther tapetal cells, stigma and in young vascular bundles of expanding leaves, cotyledons, roots, pedicel of flowers and siliques.

It is found in the cytoplasm. It localises to the cytosol. It catalyses the reaction oxaloacetate + acetyl-CoA + ADP + phosphate = citrate + ATP + CoA. Functionally, ATP citrate-lyase is the primary enzyme responsible for the synthesis of cytosolic acetyl-CoA, used for the elongation of fatty acids and biosynthesis of isoprenoids, flavonoids and malonated derivatives. May supply substrate to the cytosolic acetyl-CoA carboxylase, which generates the malonyl-CoA used for the synthesis of a multitude of compounds, including very long chain fatty acids and flavonoids. Required for normal growth and development and elongation of C18 fatty acids to C20 to C24 fatty acids in seeds. n contrast to all known animal ACL enzymes having a homomeric structure, plant ACLs are composed of alpha and beta chains. This chain is ATP-citrate synthase beta chain protein 2, found in Arabidopsis thaliana (Mouse-ear cress).